A 155-amino-acid chain; its full sequence is NADPH-dependent 7-cyano-7-deazaguanine reductase (155 aa).

Positions 1–20 (MMPNTDVSSLSMLGQQTETA) are enriched in polar residues. The tract at residues 1–26 (MMPNTDVSSLSMLGQQTETAKSPEEA) is disordered. The active-site Thioimide intermediate is cysteine 53. The active-site Proton donor is aspartate 60. Substrate is bound by residues 75-77 (VES) and 94-95 (HE).

It belongs to the GTP cyclohydrolase I family. QueF type 1 subfamily.

The protein localises to the cytoplasm. It catalyses the reaction 7-aminomethyl-7-carbaguanine + 2 NADP(+) = 7-cyano-7-deazaguanine + 2 NADPH + 3 H(+). Its pathway is tRNA modification; tRNA-queuosine biosynthesis. Functionally, catalyzes the NADPH-dependent reduction of 7-cyano-7-deazaguanine (preQ0) to 7-aminomethyl-7-deazaguanine (preQ1). This is NADPH-dependent 7-cyano-7-deazaguanine reductase from Rhizobium etli (strain CIAT 652).